The primary structure comprises 373 residues: Alpha-N-acetylgalactosaminide alpha-2,6-sialyltransferase 2 (373 aa).

At 1-6 (MDLPRR) the chain is on the cytoplasmic side. The chain crosses the membrane as a helical; Signal-anchor for type II membrane protein span at residues 7–27 (WLFRMLLLVATSSGILLMLYS). The Lumenal portion of the chain corresponds to 28-373 (SAGQQSPETQ…NAGILWLYQR (346 aa)). 2 disulfide bridges follow: cysteine 65-cysteine 147 and cysteine 150-cysteine 316. Residue asparagine 103 is glycosylated (N-linked (GlcNAc...) asparagine). Residue asparagine 155 participates in CMP-N-acetyl-beta-neuraminate binding. Residue asparagine 160 is glycosylated (N-linked (GlcNAc...) asparagine). Residues asparagine 178, serine 303, and histidine 335 each contribute to the CMP-N-acetyl-beta-neuraminate site.

The protein belongs to the glycosyltransferase 29 family. As to expression, highly expressed in lactating mammary gland and adult testis. Lower levels in kidney.

It is found in the golgi apparatus membrane. The catalysed reaction is a beta-D-galactosyl-(1-&gt;3)-N-acetyl-alpha-D-galactosaminyl derivative + CMP-N-acetyl-beta-neuraminate = a beta-D-galactosyl-(1-&gt;3)-[N-acetyl-alpha-neuraminyl-(2-&gt;6)]-N-acetyl-alpha-D-galactosaminyl derivative + CMP + H(+). It carries out the reaction a 3-O-[N-acetyl-alpha-D-galactosaminyl]-L-threonyl-[protein] + CMP-N-acetyl-beta-neuraminate = a 3-O-[N-acetyl-alpha-neuraminosyl-(2-&gt;6)-N-acetyl-alpha-D-galactosaminyl]-L-threonyl-[protein] + CMP + H(+). It catalyses the reaction a 3-O-[N-acetyl-alpha-neuraminyl-(2-&gt;3)-beta-D-galactosyl-(1-&gt;3)-N-acetyl-alpha-D-galactosaminyl]-L-threonyl-[protein] + CMP-N-acetyl-beta-neuraminate = a 3-O-{alpha-Neu5Ac-(2-&gt;3)-beta-D-Gal-(1-&gt;3)-[alpha-Neu5Ac-(2-&gt;6)]-alpha-D-GalNAc}-L-threonyl-[protein] + CMP + H(+). It functions in the pathway protein modification; protein glycosylation. Catalyzes the transfer of N-acetylneuraminyl groups onto glycan chains in glycoproteins. Conjugates sialic acid with an alpha-2-6 linkage to N-acetylgalactosamine (GalNAc) glycan chains linked to serine or threonine in glycoproteins. Sialylates alphaGalNAc- and Galbeta1-&gt;3GalNAc-O-Ser/Thr epitopes also known as Tn and T antigens. This chain is Alpha-N-acetylgalactosaminide alpha-2,6-sialyltransferase 2 (St6galnac2), found in Mus musculus (Mouse).